The chain runs to 359 residues: Ribosomal RNA large subunit methyltransferase M (359 aa).

S-adenosyl-L-methionine-binding positions include serine 186, 219 to 222 (CPGG), aspartate 238, aspartate 258, and aspartate 275. The Proton acceptor role is filled by lysine 304.

Belongs to the class I-like SAM-binding methyltransferase superfamily. RNA methyltransferase RlmE family. RlmM subfamily. In terms of assembly, monomer.

The protein localises to the cytoplasm. It catalyses the reaction cytidine(2498) in 23S rRNA + S-adenosyl-L-methionine = 2'-O-methylcytidine(2498) in 23S rRNA + S-adenosyl-L-homocysteine + H(+). Its function is as follows. Catalyzes the 2'-O-methylation at nucleotide C2498 in 23S rRNA. The polypeptide is Ribosomal RNA large subunit methyltransferase M (Vibrio parahaemolyticus serotype O3:K6 (strain RIMD 2210633)).